The sequence spans 347 residues: Protein-glutamate methylesterase/protein-glutamine glutaminase 1 (347 aa).

In terms of domain architecture, Response regulatory spans 6–123 (RVLVVDDSAT…LRPFGDLAEK (118 aa)). 4-aspartylphosphate is present on Asp57. The region spanning 150–342 (FRVGRKIVAI…EEILKMTAAR (193 aa)) is the CheB-type methylesterase domain. Active-site residues include Ser162, His188, and Asp284.

This sequence belongs to the CheB family. Post-translationally, phosphorylated by CheA. Phosphorylation of the N-terminal regulatory domain activates the methylesterase activity.

Its subcellular location is the cytoplasm. The catalysed reaction is [protein]-L-glutamate 5-O-methyl ester + H2O = L-glutamyl-[protein] + methanol + H(+). The enzyme catalyses L-glutaminyl-[protein] + H2O = L-glutamyl-[protein] + NH4(+). Functionally, involved in chemotaxis. Part of a chemotaxis signal transduction system that modulates chemotaxis in response to various stimuli. Catalyzes the demethylation of specific methylglutamate residues introduced into the chemoreceptors (methyl-accepting chemotaxis proteins or MCP) by CheR. Also mediates the irreversible deamidation of specific glutamine residues to glutamic acid. The protein is Protein-glutamate methylesterase/protein-glutamine glutaminase 1 of Rhizobium johnstonii (strain DSM 114642 / LMG 32736 / 3841) (Rhizobium leguminosarum bv. viciae).